The chain runs to 122 residues: Large ribosomal subunit protein uL14 (122 aa).

The protein belongs to the universal ribosomal protein uL14 family. As to quaternary structure, part of the 50S ribosomal subunit. Forms a cluster with proteins L3 and L19. In the 70S ribosome, L14 and L19 interact and together make contacts with the 16S rRNA in bridges B5 and B8.

Functionally, binds to 23S rRNA. Forms part of two intersubunit bridges in the 70S ribosome. This Fusobacterium nucleatum subsp. nucleatum (strain ATCC 25586 / DSM 15643 / BCRC 10681 / CIP 101130 / JCM 8532 / KCTC 2640 / LMG 13131 / VPI 4355) protein is Large ribosomal subunit protein uL14.